The sequence spans 1136 residues: Protein stu-1 (1136 aa).

HEAT repeat units lie at residues 95–133 (TLPVVVDKLGDQKDKFRQIAVQALTTLYKVAPVDVERSV) and 167–205 (YVPTLMELLEDADGSVRDVAKTTVIELFKNAPNTAKSDL). 3 disordered regions span residues 524–554 (KDPHNPNAHSRTETGGARPGMGLSKSVMGAP), 567–794 (RAMA…QPQI), and 821–884 (TAGQ…LLDS). Positions 595–622 (VSSTSQASVASASTASAVPAPTKSAFGA) are enriched in low complexity. Over residues 659–668 (PAEPASPPSK) the composition is skewed to pro residues. Over residues 673 to 683 (TVTSPKTQTLV) the composition is skewed to polar residues. Residues 701 to 716 (SSESGIPIPVSGISSP) show a composition bias toward low complexity. Polar residues-rich tracts occupy residues 777 to 793 (LPTQKTPSPTEESQQPQ) and 822 to 833 (AGQTQPQSTYTS).

It belongs to the CLASP family. Interacts with microtubules.

The protein localises to the nucleus. The protein resides in the cytoplasm. Its subcellular location is the cytoskeleton. It is found in the spindle. In terms of biological role, microtubule binding protein that promotes the stabilization of dynamic microtubules. Required for mitotic spindle formation. In Neurospora crassa (strain ATCC 24698 / 74-OR23-1A / CBS 708.71 / DSM 1257 / FGSC 987), this protein is Protein stu-1 (stu-1).